Here is a 749-residue protein sequence, read N- to C-terminus: Cytosolic phospholipase A2 (749 aa).

The interval 1-178 (MSFIDPYQHI…MKKLLGPKNS (178 aa)) is phospholipid binding. Position 2 is a phosphoserine (Ser2). One can recognise a C2 domain in the interval 6–122 (PYQHIIVEHH…KVGEKKQVPF (117 aa)). Residues Asp40, Thr41, Asp43, Asn65, Asp93, Ala94, and Asn95 each coordinate Ca(2+). The 601-residue stretch at 140 to 740 (SSPDLRFSMA…SSVEARRFFN (601 aa)) folds into the PLA2c domain. The Nucleophile role is filled by Ser228. Thr268 is modified (phosphothreonine). Residues 426 to 458 (AKHIVSNDSSDSDDESQGPKGTEHEEAEREYQN) form a disordered region. Phosphoserine occurs at positions 434, 435, and 437. The segment covering 446 to 457 (GTEHEEAEREYQ) has biased composition (basic and acidic residues). Ser505 is modified (phosphoserine; by MAPK). Residue Ser515 is modified to Phosphoserine. Lys541 participates in a covalent cross-link: Glycyl lysine isopeptide (Lys-Gly) (interchain with G-Cter in SUMO2). The Proton acceptor role is filled by Asp549. Lys606 participates in a covalent cross-link: Glycyl lysine isopeptide (Lys-Gly) (interchain with G-Cter in SUMO2). Phosphoserine occurs at positions 727 and 729.

Interacts with KAT5. In terms of processing, phosphorylated at both Ser-505 and Ser-727 in response to mitogenic stimuli. As to expression, detected in granulosa cells after stimulation with chorionic gonadotropin (at protein level).

The protein localises to the cytoplasm. It localises to the golgi apparatus membrane. The protein resides in the nucleus envelope. The enzyme catalyses a 1,2-diacyl-sn-glycero-3-phosphocholine + H2O = a 1-acyl-sn-glycero-3-phosphocholine + a fatty acid + H(+). The catalysed reaction is a 1-O-alkyl-2-acyl-sn-glycero-3-phosphocholine + H2O = a 1-O-alkyl-sn-glycero-3-phosphocholine + a fatty acid + H(+). It carries out the reaction a 1-acyl-sn-glycero-3-phosphocholine + H2O = sn-glycerol 3-phosphocholine + a fatty acid + H(+). It catalyses the reaction 1-hexadecanoyl-2-(5Z,8Z,11Z,14Z-eicosatetraenoyl)-sn-glycero-3-phosphocholine + H2O = 1-hexadecanoyl-sn-glycero-3-phosphocholine + (5Z,8Z,11Z,14Z)-eicosatetraenoate + H(+). The enzyme catalyses 1,2-di-(5Z,8Z,11Z,14Z-eicosatetraenoyl)-sn-glycero-3-phosphocholine + H2O = 1-(5Z,8Z,11Z,14Z-eicosatetraenoyl)-sn-glycero-3-phosphocholine + (5Z,8Z,11Z,14Z)-eicosatetraenoate + H(+). The catalysed reaction is 1-octadecanoyl-2-(5Z,8Z,11Z,14Z-eicosatetraenoyl)-sn-glycero-3-phosphocholine + H2O = 1-octadecanoyl-sn-glycero-3-phosphocholine + (5Z,8Z,11Z,14Z)-eicosatetraenoate + H(+). It carries out the reaction 1-hexadecanoyl-2-(9Z,12Z-octadecadienoyl)-sn-glycero-3-phosphocholine + H2O = (9Z,12Z)-octadecadienoate + 1-hexadecanoyl-sn-glycero-3-phosphocholine + H(+). It catalyses the reaction 1-octadecanoyl-2-(9Z,12Z,15Z-octadecatrienoyl)-sn-glycero-3-phosphocholine + H2O = (9Z,12Z,15Z)-octadecatrienoate + 1-octadecanoyl-sn-glycero-3-phosphocholine + H(+). The enzyme catalyses 1-(5Z,8Z,11Z,14Z-eicosatetraenoyl)-2-hexadecanoyl-sn-glycero-3-phosphocholine + H2O = 1-(5Z,8Z,11Z,14Z-eicosatetraenoyl)-sn-glycero-3-phosphocholine + hexadecanoate + H(+). The catalysed reaction is 1-O-hexadecyl-2-(5Z,8Z,11Z,14Z)-eicosatetraenoyl-sn-glycero-3-phosphocholine + H2O = 1-O-hexadecyl-sn-glycero-3-phosphocholine + (5Z,8Z,11Z,14Z)-eicosatetraenoate + H(+). It carries out the reaction 1,2-di-(9Z-octadecenoyl)-sn-glycero-3-phospho-(1'-sn-glycerol) + H2O = 1-(9Z-octadecenoyl)-sn-glycero-3-phospho-(1'-sn-glycerol) + (9Z)-octadecenoate + H(+). It catalyses the reaction 1-octadecanoyl-2-(5Z,8Z,11Z,14Z-eicosatetraenoyl)-sn-glycero-3-phosphate + H2O = 1-octadecanoyl-sn-glycero-3-phosphate + (5Z,8Z,11Z,14Z)-eicosatetraenoate + H(+). The enzyme catalyses 1-hexadecanoyl-sn-glycero-3-phosphocholine + H2O = sn-glycerol 3-phosphocholine + hexadecanoate + H(+). The catalysed reaction is 2-(prostaglandin E2)-sn-glycero-3-phosphoethanolamine + H2O = sn-glycero-3-phosphoethanolamine + prostaglandin E2 + H(+). It carries out the reaction 2-[(15S)-hydroxy-(5Z,8Z,11Z,13E)-eicosatetraenoyl]-sn-glycero-3-phosphocholine + H2O = (15S)-hydroxy-(5Z,8Z,11Z,13E)-eicosatetraenoate + sn-glycerol 3-phosphocholine + H(+). It catalyses the reaction 2-[(15R)-hydroxy-(5Z,8Z,11Z,13E)-eicosatetraenoyl]-sn-glycero-3-phosphocholine + H2O = (15R)-hydroxy-(5Z,8Z,11Z,13E)-eicosatetraenoate + sn-glycerol 3-phosphocholine + H(+). The enzyme catalyses 2-(prostaglandin E2)-sn-glycero-3-phosphocholine + H2O = prostaglandin E2 + sn-glycerol 3-phosphocholine + H(+). The catalysed reaction is 2-[(11R)-hydroxy-(5Z,8Z,12E,14Z)-eicosatetraenoyl]-sn-glycero-3-phosphocholine + H2O = (11R)-hydroxy-(5Z,8Z,12E,14Z)-eicosatetraenoate + sn-glycerol 3-phosphocholine + H(+). It carries out the reaction 1-(5Z,8Z,11Z,14Z-eicosatetraenoyl)-2-O-hexadecyl-sn-glycero-3-phosphocholine + H2O = 2-O-hexadecyl-sn-glycero-3-phosphocholine + (5Z,8Z,11Z,14Z)-eicosatetraenoate + H(+). It catalyses the reaction 1-octadecanoyl-2-(5Z,8Z,11Z,14Z-eicosatetraenoyl)-sn-glycero-3-phosphocholine + glycerol = 1-(5Z,8Z,11Z,14Z-eicosatetraenoyl)-glycerol + 1-octadecanoyl-sn-glycero-3-phosphocholine. The enzyme catalyses 1-octadecanoyl-2-(9Z,12Z,15Z-octadecatrienoyl)-sn-glycero-3-phosphocholine + glycerol = 1-(9Z,12Z,15Z-octadecatrienoyl)-glycerol + 1-octadecanoyl-sn-glycero-3-phosphocholine. It participates in membrane lipid metabolism; glycerophospholipid metabolism. Its pathway is lipid metabolism; arachidonate metabolism. It functions in the pathway lipid metabolism; prostaglandin biosynthesis. The protein operates within lipid metabolism; leukotriene B4 biosynthesis. With respect to regulation, activated by cytosolic calcium, which is necessary for binding to membrane lipids. Activated by phosphorylation in response to mitogenic stimuli. Has primarily calcium-dependent phospholipase and lysophospholipase activities, with a major role in membrane lipid remodeling and biosynthesis of lipid mediators of the inflammatory response. Plays an important role in embryo implantation and parturition through its ability to trigger prostanoid production. Preferentially hydrolyzes the ester bond of the fatty acyl group attached at sn-2 position of phospholipids (phospholipase A2 activity). Selectively hydrolyzes sn-2 arachidonoyl group from membrane phospholipids, providing the precursor for eicosanoid biosynthesis via the cyclooxygenase pathway. In an alternative pathway of eicosanoid biosynthesis, hydrolyzes sn-2 fatty acyl chain of eicosanoid lysophopholipids to release free bioactive eicosanoids. Hydrolyzes the ester bond of the fatty acyl group attached at sn-1 position of phospholipids (phospholipase A1 activity) only if an ether linkage rather than an ester linkage is present at the sn-2 position. This hydrolysis is not stereospecific. Has calcium-independent phospholipase A2 and lysophospholipase activities in the presence of phosphoinositides. Has O-acyltransferase activity. Catalyzes the transfer of fatty acyl chains from phospholipids to a primary hydroxyl group of glycerol (sn-1 or sn-3), potentially contributing to monoacylglycerol synthesis. The polypeptide is Cytosolic phospholipase A2 (PLA2G4A) (Bos taurus (Bovine)).